The primary structure comprises 133 residues: DNA-directed RNA polymerase subunit omega (133 aa).

Belongs to the RNA polymerase subunit omega family. As to quaternary structure, the RNAP catalytic core consists of 2 alpha, 1 beta, 1 beta' and 1 omega subunit. When a sigma factor is associated with the core the holoenzyme is formed, which can initiate transcription.

The enzyme catalyses RNA(n) + a ribonucleoside 5'-triphosphate = RNA(n+1) + diphosphate. In terms of biological role, promotes RNA polymerase assembly. Latches the N- and C-terminal regions of the beta' subunit thereby facilitating its interaction with the beta and alpha subunits. The chain is DNA-directed RNA polymerase subunit omega from Mesorhizobium japonicum (strain LMG 29417 / CECT 9101 / MAFF 303099) (Mesorhizobium loti (strain MAFF 303099)).